A 437-amino-acid chain; its full sequence is Amino-acid acetyltransferase (437 aa).

Positions 289 to 437 (ECIRLATSFD…SKVLMLALDN (149 aa)) constitute an N-acetyltransferase domain.

This sequence belongs to the acetyltransferase family. ArgA subfamily.

The protein localises to the cytoplasm. It catalyses the reaction L-glutamate + acetyl-CoA = N-acetyl-L-glutamate + CoA + H(+). It functions in the pathway amino-acid biosynthesis; L-arginine biosynthesis; N(2)-acetyl-L-ornithine from L-glutamate: step 1/4. The chain is Amino-acid acetyltransferase from Haemophilus ducreyi (strain 35000HP / ATCC 700724).